The following is a 239-amino-acid chain: Pre-mRNA-splicing factor isy1 (239 aa).

Belongs to the ISY1 family. As to quaternary structure, associated with the spliceosome.

It localises to the cytoplasm. Its subcellular location is the nucleus. In terms of biological role, involved in pre-mRNA splicing. This Neurospora crassa (strain ATCC 24698 / 74-OR23-1A / CBS 708.71 / DSM 1257 / FGSC 987) protein is Pre-mRNA-splicing factor isy1 (msp-7).